The chain runs to 1107 residues: Ubiquitin-associated protein 2-like (1107 aa).

N-acetylmethionine is present on methionine 1. Positions 1-33 are disordered; the sequence is MMTSVGTNRARGNWEQPQNQNQTQHKQRPQATA. The UBA domain occupies 49 to 89; it reads DFEEKVKQLIDITGKNQDECVIALHDCNGDVNRAINVLLEG. The segment at 92 to 229 is disordered; the sequence is DTHSWEMVGK…NTWNNTGHFE (138 aa). Residues 118-132 show a composition bias toward basic and acidic residues; it reads EEGKENRDRDRDYSR. Positions 133-145 are enriched in basic residues; sequence RRGGPPRRGRGAS. Residues arginine 187 and arginine 190 each carry the asymmetric dimethylarginine modification. Positions 213–226 are enriched in low complexity; sequence NYGNSSGNTWNNTG. Residues serine 376, serine 380, and serine 436 each carry the phosphoserine modification. Threonine 445 is modified (phosphothreonine). Disordered regions lie at residues 461–513, 550–676, and 689–814; these read AVAT…KKTS, SDYE…IPSL, and ANQH…LPPG. 5 positions are modified to phosphoserine: serine 474, serine 487, serine 490, serine 491, and serine 497. Low complexity-rich tracts occupy residues 494–505 and 554–589; these read QSSSPQPAQQKL and STPTTSASSSQAPSSLYTSTASESSSTVSSNQSQES. Over residues 590–656 the composition is skewed to polar residues; that stretch reads GYQSGPIQST…TQLQTTQSVE (67 aa). Residues serine 624, serine 625, serine 628, and serine 629 each carry the phosphoserine modification. Residues 665–675 show a composition bias toward low complexity; it reads SESPSTSSIPS. The segment covering 689-713 has biased composition (polar residues); that stretch reads ANQHSSSLSGLSHTEEIPNTTTTQH. Positions 714–804 are enriched in low complexity; that stretch reads SSALSTQQNT…STRSSVATTS (91 aa). Phosphoserine is present on residues serine 872 and serine 879. 2 disordered regions span residues 885–921 and 1060–1107; these read FGRGDASSPAPATTLAQPQQNQTQTHHTTQQTFLNPA and QQPH…WGAN. Composition is skewed to low complexity over residues 893–916 and 1073–1087; these read PAPATTLAQPQQNQTQTHHTTQQT and QDGQTGSGQRSQTSS. Residues 1088–1107 are compositionally biased toward polar residues; the sequence is IPQKPQTNKSAYNSYSWGAN.

Interacts with BMI1. Part of a complex consisting of UBAP2L, BMI1 and RNF2. Interacts with G3BP1 (via NTF2 domain); promoting stress granule formation.

The protein resides in the nucleus. It is found in the chromosome. It localises to the cytoplasm. Its subcellular location is the stress granule. Recruits the ubiquitination machinery to RNA polymerase II for polyubiquitination, removal and degradation, when the transcription-coupled nucleotide excision repair (TC-NER) machinery fails to resolve DNA damage. Plays an important role in the activity of long-term repopulating hematopoietic stem cells (LT-HSCs). Is a regulator of stress granule assembly, required for their efficient formation. Required for proper brain development and neocortex lamination. The chain is Ubiquitin-associated protein 2-like from Mus musculus (Mouse).